The sequence spans 634 residues: 1,4-alpha-glucan branching enzyme GlgB (634 aa).

The active-site Nucleophile is aspartate 305. Glutamate 357 serves as the catalytic Proton donor.

The protein belongs to the glycosyl hydrolase 13 family. GlgB subfamily. Monomer.

The enzyme catalyses Transfers a segment of a (1-&gt;4)-alpha-D-glucan chain to a primary hydroxy group in a similar glucan chain.. The protein operates within glycan biosynthesis; glycogen biosynthesis. Catalyzes the formation of the alpha-1,6-glucosidic linkages in glycogen by scission of a 1,4-alpha-linked oligosaccharide from growing alpha-1,4-glucan chains and the subsequent attachment of the oligosaccharide to the alpha-1,6 position. The chain is 1,4-alpha-glucan branching enzyme GlgB from Lactiplantibacillus plantarum (strain ATCC BAA-793 / NCIMB 8826 / WCFS1) (Lactobacillus plantarum).